A 521-amino-acid chain; its full sequence is GMP synthase [glutamine-hydrolyzing] (521 aa).

The 193-residue stretch at 5–197 (KILILDFGSQ…VLDICGAQPG (193 aa)) folds into the Glutamine amidotransferase type-1 domain. Cysteine 81 serves as the catalytic Nucleophile. Catalysis depends on residues histidine 171 and glutamate 173. The GMPS ATP-PPase domain maps to 198 to 390 (WTMPNYIEEA…LGLPREMVYR (193 aa)). 225–231 (SGGVDSS) contributes to the ATP binding site.

In terms of assembly, homodimer.

The catalysed reaction is XMP + L-glutamine + ATP + H2O = GMP + L-glutamate + AMP + diphosphate + 2 H(+). It functions in the pathway purine metabolism; GMP biosynthesis; GMP from XMP (L-Gln route): step 1/1. Catalyzes the synthesis of GMP from XMP. The protein is GMP synthase [glutamine-hydrolyzing] of Neisseria meningitidis serogroup C (strain 053442).